Here is a 338-residue protein sequence, read N- to C-terminus: Ketol-acid reductoisomerase (NADP(+)) (338 aa).

A KARI N-terminal Rossmann domain is found at methionine 1–threonine 181. Residues tyrosine 24 to glutamine 27, arginine 47, serine 50, threonine 52, and aspartate 82 to glutamine 85 contribute to the NADP(+) site. Residue histidine 107 is part of the active site. Residue glycine 133 coordinates NADP(+). Residues threonine 182–isoleucine 327 form the KARI C-terminal knotted domain. Residues aspartate 190, glutamate 194, glutamate 226, and glutamate 230 each contribute to the Mg(2+) site. Residue serine 251 coordinates substrate.

The protein belongs to the ketol-acid reductoisomerase family. Requires Mg(2+) as cofactor.

The enzyme catalyses (2R)-2,3-dihydroxy-3-methylbutanoate + NADP(+) = (2S)-2-acetolactate + NADPH + H(+). It carries out the reaction (2R,3R)-2,3-dihydroxy-3-methylpentanoate + NADP(+) = (S)-2-ethyl-2-hydroxy-3-oxobutanoate + NADPH + H(+). It functions in the pathway amino-acid biosynthesis; L-isoleucine biosynthesis; L-isoleucine from 2-oxobutanoate: step 2/4. Its pathway is amino-acid biosynthesis; L-valine biosynthesis; L-valine from pyruvate: step 2/4. Involved in the biosynthesis of branched-chain amino acids (BCAA). Catalyzes an alkyl-migration followed by a ketol-acid reduction of (S)-2-acetolactate (S2AL) to yield (R)-2,3-dihydroxy-isovalerate. In the isomerase reaction, S2AL is rearranged via a Mg-dependent methyl migration to produce 3-hydroxy-3-methyl-2-ketobutyrate (HMKB). In the reductase reaction, this 2-ketoacid undergoes a metal-dependent reduction by NADPH to yield (R)-2,3-dihydroxy-isovalerate. The polypeptide is Ketol-acid reductoisomerase (NADP(+)) (Pseudomonas fluorescens (strain SBW25)).